Consider the following 282-residue polypeptide: Pantothenate synthetase (282 aa).

30–37 (MGNLHEGH) lines the ATP pocket. Residue H37 is the Proton donor of the active site. Q61 is a (R)-pantoate binding site. Q61 serves as a coordination point for beta-alanine. 149-152 (GEKD) serves as a coordination point for ATP. Q155 is a (R)-pantoate binding site. ATP-binding positions include V178 and 186–189 (KSSR).

The protein belongs to the pantothenate synthetase family. Homodimer.

The protein localises to the cytoplasm. It carries out the reaction (R)-pantoate + beta-alanine + ATP = (R)-pantothenate + AMP + diphosphate + H(+). It functions in the pathway cofactor biosynthesis; (R)-pantothenate biosynthesis; (R)-pantothenate from (R)-pantoate and beta-alanine: step 1/1. Functionally, catalyzes the condensation of pantoate with beta-alanine in an ATP-dependent reaction via a pantoyl-adenylate intermediate. The sequence is that of Pantothenate synthetase from Marinobacter nauticus (strain ATCC 700491 / DSM 11845 / VT8) (Marinobacter aquaeolei).